The following is a 41-amino-acid chain: Large ribosomal subunit protein bL36 (41 aa).

The protein belongs to the bacterial ribosomal protein bL36 family.

This chain is Large ribosomal subunit protein bL36, found in Pelagibacter ubique (strain HTCC1062).